The chain runs to 89 residues: Small ribosomal subunit protein uS14 (89 aa).

This sequence belongs to the universal ribosomal protein uS14 family. In terms of assembly, part of the 30S ribosomal subunit. Contacts proteins S3 and S10.

Its function is as follows. Binds 16S rRNA, required for the assembly of 30S particles and may also be responsible for determining the conformation of the 16S rRNA at the A site. The sequence is that of Small ribosomal subunit protein uS14 from Phytoplasma australiense.